A 784-amino-acid chain; its full sequence is Lon protease (784 aa).

The region spanning 11-204 (IPVLPLRDVV…YLMAMMESEI (194 aa)) is the Lon N-terminal domain. 356-363 (GPPGVGKT) is a binding site for ATP. The 182-residue stretch at 592–773 (ENRVGQVTGL…EEVLALALQN (182 aa)) folds into the Lon proteolytic domain. Catalysis depends on residues Ser-679 and Lys-722.

Belongs to the peptidase S16 family. Homohexamer. Organized in a ring with a central cavity.

The protein localises to the cytoplasm. The enzyme catalyses Hydrolysis of proteins in presence of ATP.. ATP-dependent serine protease that mediates the selective degradation of mutant and abnormal proteins as well as certain short-lived regulatory proteins. Required for cellular homeostasis and for survival from DNA damage and developmental changes induced by stress. Degrades polypeptides processively to yield small peptide fragments that are 5 to 10 amino acids long. Binds to DNA in a double-stranded, site-specific manner. This is Lon protease from Erwinia amylovora (Fire blight bacteria).